The primary structure comprises 95 residues: Putative pterin-4-alpha-carbinolamine dehydratase (95 aa).

Belongs to the pterin-4-alpha-carbinolamine dehydratase family.

The catalysed reaction is (4aS,6R)-4a-hydroxy-L-erythro-5,6,7,8-tetrahydrobiopterin = (6R)-L-erythro-6,7-dihydrobiopterin + H2O. In Prochlorococcus marinus (strain NATL2A), this protein is Putative pterin-4-alpha-carbinolamine dehydratase.